A 242-amino-acid chain; its full sequence is UPF0246 protein SP70585_1589 (242 aa).

This sequence belongs to the UPF0246 family.

This Streptococcus pneumoniae (strain 70585) protein is UPF0246 protein SP70585_1589.